The chain runs to 464 residues: UDP-N-acetylmuramoylalanine--D-glutamate ligase (464 aa).

112–118 (GTDGKTT) is a binding site for ATP.

Belongs to the MurCDEF family.

The protein resides in the cytoplasm. The catalysed reaction is UDP-N-acetyl-alpha-D-muramoyl-L-alanine + D-glutamate + ATP = UDP-N-acetyl-alpha-D-muramoyl-L-alanyl-D-glutamate + ADP + phosphate + H(+). It functions in the pathway cell wall biogenesis; peptidoglycan biosynthesis. Cell wall formation. Catalyzes the addition of glutamate to the nucleotide precursor UDP-N-acetylmuramoyl-L-alanine (UMA). This chain is UDP-N-acetylmuramoylalanine--D-glutamate ligase, found in Chlorobium chlorochromatii (strain CaD3).